The sequence spans 262 residues: Transmembrane protein 81 (262 aa).

An N-terminal signal peptide occupies residues 1–30 (MKAVATVFICGSLVLITYLPLVVTSPQTLA). At 31–225 (IPEKLRQAVG…HLPGWRKKVS (195 aa)) the chain is on the extracellular side. N-linked (GlcNAc...) asparagine glycosylation is present at Asn45. The Ig-like domain occupies 83-171 (TNWICGMLHF…VQQLKNLKLV (89 aa)). A disulfide bridge links Cys104 with Cys160. A glycan (N-linked (GlcNAc...) asparagine) is linked at Asn211. The helical transmembrane segment at 226 to 246 (LALGVGIAAGVVGGVLVNVAL) threads the bilayer. Residues 247–262 (CRVLGGTGGNGNLSSL) lie on the Cytoplasmic side of the membrane.

In terms of assembly, forms a complex with IZUMO1 and SPACA6 on spermatocyte cell membrane required for fertilization.

The protein localises to the cell membrane. In terms of biological role, essential fertilization factor required for male fertility. Part of a conserved trimeric sperm complex with the essential fertilization factors IZUMO1 and SPACA6 which bridges sperm and oocyte membranes during fertilization by binding to IZUMO1R/JUNO on the oocyte. This chain is Transmembrane protein 81 (Tmem81), found in Rattus norvegicus (Rat).